Here is a 226-residue protein sequence, read N- to C-terminus: ATP synthase subunit a (226 aa).

The next 5 membrane-spanning stretches (helical) occupy residues 17–37 (FLFV…AKLA), 78–98 (LVAT…IPGF), 104–124 (NINF…FEGI), 175–195 (LFVW…GFAL), and 201–221 (FLQT…AVLL).

Belongs to the ATPase A chain family. F-type ATPases have 2 components, CF(1) - the catalytic core - and CF(0) - the membrane proton channel. CF(1) has five subunits: alpha(3), beta(3), gamma(1), delta(1), epsilon(1). CF(0) has three main subunits: a(1), b(2) and c(9-12). The alpha and beta chains form an alternating ring which encloses part of the gamma chain. CF(1) is attached to CF(0) by a central stalk formed by the gamma and epsilon chains, while a peripheral stalk is formed by the delta and b chains.

The protein localises to the cell inner membrane. Its function is as follows. Key component of the proton channel; it plays a direct role in the translocation of protons across the membrane. The sequence is that of ATP synthase subunit a from Nitratiruptor sp. (strain SB155-2).